Here is an 89-residue protein sequence, read N- to C-terminus: MALTNADRAAIIAKFARAENDTGSPEVQVALLTAQINDLQGHFKEHKHDHHSRRGLIRMVNQRRKLLDYLNGKDHGRYVSLIGELGLRR.

The protein belongs to the universal ribosomal protein uS15 family. Part of the 30S ribosomal subunit. Forms a bridge to the 50S subunit in the 70S ribosome, contacting the 23S rRNA.

Its function is as follows. One of the primary rRNA binding proteins, it binds directly to 16S rRNA where it helps nucleate assembly of the platform of the 30S subunit by binding and bridging several RNA helices of the 16S rRNA. Forms an intersubunit bridge (bridge B4) with the 23S rRNA of the 50S subunit in the ribosome. The polypeptide is Small ribosomal subunit protein uS15 (Acinetobacter baylyi (strain ATCC 33305 / BD413 / ADP1)).